Here is a 340-residue protein sequence, read N- to C-terminus: N-acetyl-gamma-glutamyl-phosphate reductase (340 aa).

Cys-149 is an active-site residue.

This sequence belongs to the NAGSA dehydrogenase family. Type 1 subfamily.

It localises to the cytoplasm. The enzyme catalyses N-acetyl-L-glutamate 5-semialdehyde + phosphate + NADP(+) = N-acetyl-L-glutamyl 5-phosphate + NADPH + H(+). The protein operates within amino-acid biosynthesis; L-arginine biosynthesis; N(2)-acetyl-L-ornithine from L-glutamate: step 3/4. In terms of biological role, catalyzes the NADPH-dependent reduction of N-acetyl-5-glutamyl phosphate to yield N-acetyl-L-glutamate 5-semialdehyde. This chain is N-acetyl-gamma-glutamyl-phosphate reductase, found in Ruthia magnifica subsp. Calyptogena magnifica.